Here is a 146-residue protein sequence, read N- to C-terminus: Leptin (146 aa).

C96 and C146 are oxidised to a cystine.

This sequence belongs to the leptin family.

It is found in the secreted. Its function is as follows. Key player in the regulation of energy balance and body weight control. Once released into the circulation, has central and peripheral effects by binding LEPR, found in many tissues, which results in the activation of several major signaling pathways. In the hypothalamus, acts as an appetite-regulating factor that induces a decrease in food intake and an increase in energy consumption by inducing anorexinogenic factors and suppressing orexigenic neuropeptides, also regulates bone mass and secretion of hypothalamo-pituitary-adrenal hormones. In the periphery, increases basal metabolism, influences reproductive function, regulates pancreatic beta-cell function and insulin secretion, is pro-angiogenic for endothelial cell and affects innate and adaptive immunity. In the arcuate nucleus of the hypothalamus, activates by depolarization POMC neurons inducing FOS and SOCS3 expression to release anorexigenic peptides and inhibits by hyperpolarization NPY neurons inducing SOCS3 with a consequent reduction on release of orexigenic peptides. In addition to its known satiety inducing effect, has a modulatory role in nutrient absorption. In the intestine, reduces glucose absorption by enterocytes by activating PKC and leading to a sequential activation of p38, PI3K and ERK signaling pathways which exerts an inhibitory effect on glucose absorption. Acts as a growth factor on certain tissues, through the activation of different signaling pathways increases expression of genes involved in cell cycle regulation such as CCND1, via JAK2-STAT3 pathway, or VEGFA, via MAPK1/3 and PI3K-AKT1 pathways. May also play an apoptotic role via JAK2-STAT3 pathway and up-regulation of BIRC5 expression. Pro-angiogenic, has mitogenic activity on vascular endothelial cells and plays a role in matrix remodeling by regulating the expression of matrix metalloproteinases (MMPs) and tissue inhibitors of metalloproteinases (TIMPs). In innate immunity, modulates the activity and function of neutrophils by increasing chemotaxis and the secretion of oxygen radicals. Increases phagocytosis by macrophages and enhances secretion of pro-inflammatory mediators. Increases cytotoxic ability of NK cells. Plays a pro-inflammatory role, in synergy with IL1B, by inducing NOS2 which promotes the production of IL6, IL8 and Prostaglandin E2, through a signaling pathway that involves JAK2, PI3K, MAP2K1/MEK1 and MAPK14/p38. In adaptive immunity, promotes the switch of memory T-cells towards T helper-1 cell immune responses. Increases CD4(+)CD25(-) T-cell proliferation and reduces autophagy during TCR (T-cell receptor) stimulation, through MTOR signaling pathway activation and BCL2 up-regulation. In Ovis aries (Sheep), this protein is Leptin (LEP).